We begin with the raw amino-acid sequence, 178 residues long: Translation initiation factor IF-3 (178 aa).

The protein belongs to the IF-3 family. Monomer.

It localises to the cytoplasm. IF-3 binds to the 30S ribosomal subunit and shifts the equilibrium between 70S ribosomes and their 50S and 30S subunits in favor of the free subunits, thus enhancing the availability of 30S subunits on which protein synthesis initiation begins. The polypeptide is Translation initiation factor IF-3 (Ralstonia nicotianae (strain ATCC BAA-1114 / GMI1000) (Ralstonia solanacearum)).